A 548-amino-acid chain; its full sequence is Glucose-6-phosphate isomerase (548 aa).

Residue Glu-355 is the Proton donor of the active site. Active-site residues include His-386 and Lys-514.

This sequence belongs to the GPI family.

The protein localises to the cytoplasm. The catalysed reaction is alpha-D-glucose 6-phosphate = beta-D-fructose 6-phosphate. The protein operates within carbohydrate biosynthesis; gluconeogenesis. It functions in the pathway carbohydrate degradation; glycolysis; D-glyceraldehyde 3-phosphate and glycerone phosphate from D-glucose: step 2/4. Its function is as follows. Catalyzes the reversible isomerization of glucose-6-phosphate to fructose-6-phosphate. The polypeptide is Glucose-6-phosphate isomerase (Proteus mirabilis (strain HI4320)).